A 370-amino-acid chain; its full sequence is ECF RNA polymerase sigma factor SigG (370 aa).

Positions 63-129 are sigma-70 factor domain-2; that stretch reads EPYRRELLAH…LTALEGRRRR (67 aa). The Polymerase core binding motif lies at 85 to 88; that stretch reads DLVQ. The segment at 180–232 is sigma-70 factor domain-4; that stretch reads LAFVAALQHLSPRQRAVLLLRDVLQWKSAEVADAIGTSTVAVNSLLQRARSQL. Positions 207 to 226 form a DNA-binding region, H-T-H motif; the sequence is SAEVADAIGTSTVAVNSLLQ.

This sequence belongs to the sigma-70 factor family. ECF subfamily. Interacts transiently with the RNA polymerase catalytic core formed by RpoA, RpoB, RpoC and RpoZ (2 alpha, 1 beta, 1 beta' and 1 omega subunit) to form the RNA polymerase holoenzyme that can initiate transcription.

Functionally, sigma factors are initiation factors that promote the attachment of RNA polymerase to specific initiation sites and are then released. Extracytoplasmic function (ECF) sigma factors are held in an inactive form by a cognate anti-sigma factor until released, although no anti-sigma factor is known for this protein. May be involved in host intracellular survival after infection (strains H37Rv and CDC 1551). A role in the SOS response is controversial; it has been seen in strain CDC 1551 but not in H37Rv. This Mycobacterium tuberculosis (strain CDC 1551 / Oshkosh) protein is ECF RNA polymerase sigma factor SigG (sigG).